The sequence spans 453 residues: tRNA modification GTPase MnmE (453 aa).

Positions 22, 79, and 119 each coordinate (6S)-5-formyl-5,6,7,8-tetrahydrofolate. In terms of domain architecture, TrmE-type G spans 215-376 (GMKVVIAGRP…LREHLKACMG (162 aa)). Asparagine 225 lines the K(+) pocket. Residues 225-230 (NAGKSS), 244-250 (TEIAGTT), 269-272 (DTAG), and 334-337 (NKAD) each bind GTP. Serine 229 contacts Mg(2+). Threonine 244, isoleucine 246, and threonine 249 together coordinate K(+). Threonine 250 provides a ligand contact to Mg(2+). Residue lysine 453 participates in (6S)-5-formyl-5,6,7,8-tetrahydrofolate binding.

It belongs to the TRAFAC class TrmE-Era-EngA-EngB-Septin-like GTPase superfamily. TrmE GTPase family. Homodimer. Heterotetramer of two MnmE and two MnmG subunits. Requires K(+) as cofactor.

The protein resides in the cytoplasm. Exhibits a very high intrinsic GTPase hydrolysis rate. Involved in the addition of a carboxymethylaminomethyl (cmnm) group at the wobble position (U34) of certain tRNAs, forming tRNA-cmnm(5)s(2)U34. The chain is tRNA modification GTPase MnmE from Aeromonas salmonicida (strain A449).